A 177-amino-acid polypeptide reads, in one-letter code: MAEITTIARPYAKAAFDFAIEKNAVDSWAEMLNFAAMVSENETMKPLLSGSLASHQLAELFIGVCGEQVNEQGQNLLKVMAENGRLETLPAVSQLFVEMKHEWAKEIEANVVSATELSSEQQQEISVSLEKRLTRKVKLNCSIDASLIAGLIITAGDLVIDGSVRGKVSRLSDSLQS.

It belongs to the ATPase delta chain family. In terms of assembly, F-type ATPases have 2 components, F(1) - the catalytic core - and F(0) - the membrane proton channel. F(1) has five subunits: alpha(3), beta(3), gamma(1), delta(1), epsilon(1). F(0) has three main subunits: a(1), b(2) and c(10-14). The alpha and beta chains form an alternating ring which encloses part of the gamma chain. F(1) is attached to F(0) by a central stalk formed by the gamma and epsilon chains, while a peripheral stalk is formed by the delta and b chains.

It localises to the cell inner membrane. F(1)F(0) ATP synthase produces ATP from ADP in the presence of a proton or sodium gradient. F-type ATPases consist of two structural domains, F(1) containing the extramembraneous catalytic core and F(0) containing the membrane proton channel, linked together by a central stalk and a peripheral stalk. During catalysis, ATP synthesis in the catalytic domain of F(1) is coupled via a rotary mechanism of the central stalk subunits to proton translocation. In terms of biological role, this protein is part of the stalk that links CF(0) to CF(1). It either transmits conformational changes from CF(0) to CF(1) or is implicated in proton conduction. The sequence is that of ATP synthase subunit delta from Shewanella woodyi (strain ATCC 51908 / MS32).